The following is a 162-amino-acid chain: Ribosome maturation factor RimP (162 aa).

It belongs to the RimP family.

It is found in the cytoplasm. Its function is as follows. Required for maturation of 30S ribosomal subunits. In Ralstonia pickettii (strain 12J), this protein is Ribosome maturation factor RimP.